A 345-amino-acid chain; its full sequence is D-fructose 1,6-bisphosphatase class 2/sedoheptulose 1,7-bisphosphatase (345 aa).

The Mn(2+) site is built by D33, E57, D97, and E100. Residues 100 to 102 (EGT), Y131, 176 to 178 (RPR), and 198 to 200 (DGD) each bind substrate. E225 contacts Mn(2+).

This sequence belongs to the FBPase class 2 family. In terms of assembly, homotetramer. The cofactor is Mn(2+).

It carries out the reaction beta-D-fructose 1,6-bisphosphate + H2O = beta-D-fructose 6-phosphate + phosphate. It catalyses the reaction D-sedoheptulose 1,7-bisphosphate + H2O = D-sedoheptulose 7-phosphate + phosphate. It participates in carbohydrate biosynthesis; Calvin cycle. Catalyzes the hydrolysis of fructose 1,6-bisphosphate (Fru 1,6-P2) and sedoheptulose 1,7-bisphosphate (Sed 1,7-P2) to fructose 6-phosphate and sedoheptulose 7-phosphate, respectively. This Synechocystis sp. (strain ATCC 27184 / PCC 6803 / Kazusa) protein is D-fructose 1,6-bisphosphatase class 2/sedoheptulose 1,7-bisphosphatase.